We begin with the raw amino-acid sequence, 352 residues long: MQSKRECEQWCERVNPENKAALEAWVRETGIRLVQVNGQRKYGGPPPGWVGSPPPSGSEVYIGRLPQDVYEHQLIPLFQRVGRLYEFRLMMTFSGLNRGFAYARYSSRRGAQAAIATLHNHQLRPSCQLLVCRSTEKCELTVDGLPLSLNRRALLLALQPFGPCLQETLLLPSPGSAPSQIALLKFSTHRAAAMAKKALVEGQSRLCGEQVAVEWLKPDLKQHFRQQLAGPSLRFLRPDVSQLTQTREKLGSQGARAALQLLCQRMKLGSPVFLTKCLGTGPAGWHRFWYQVVIPGHPVPFSGLIWVVLASDWQDGHEVAKDAVSAQLLEALSEPRTSLWSPGAEAGTMVKQ.

RRM domains lie at Ser58 to Glu136 and Cys138 to Pro218. At Arg336 the chain carries Omega-N-methylarginine.

As to quaternary structure, interacts with APOBEC3. In terms of tissue distribution, isoform 1 and isoform 2 are expressed in testis. Isoform 1 is expressed continuously in post natal (PN) testis although levels are low between PN1 to PN6. Isoform 2 is expressed from PN 20 onwards. Isoform 2 is strongly expressed in meiotic and in post-meiotic germ cells of the testis with highest expression at the elongated spermatid stage (at protein level). Expressed in testis and heart. Expressed in germ cells and genital ridges. Not detected in testicular tumors.

Its subcellular location is the nucleus. It is found in the cytoplasm. Its function is as follows. RNA-binding factor that positively regulates gene expression by prohibiting miRNA-mediated gene suppression. Relieves miRNA repression in germline cells. Prohibits the function of several miRNAs by blocking the accessibility of target mRNAs. Sequence-specific RNA-binding factor that binds specifically to U-rich regions (URRs) in the 3' untranslated region (3'-UTR) of several mRNAs. Does not bind to miRNAs. Isoform 1 may play a role during primordial germ cell (PGC) survival. However, does not seem to be essential for PGC migration. In Mus musculus (Mouse), this protein is Dead end protein homolog 1 (Dnd1).